Here is a 441-residue protein sequence, read N- to C-terminus: Mitochondrial distribution and morphology protein 12 (441 aa).

One can recognise an SMP-LTD domain in the interval 1–441 (MSIDIDWERA…VYPSFWTFLV (441 aa)). The disordered stretch occupies residues 180–289 (TPLRAVTRGN…SGTPPRRMRE (110 aa)). Composition is skewed to polar residues over residues 226 to 245 (SRPS…SVST) and 253 to 263 (SSQTVLANNPG).

It belongs to the MDM12 family. As to quaternary structure, component of the ER-mitochondria encounter structure (ERMES) or MDM complex, composed of MMM1, MDM10, MDM12 and MDM34. An MMM1 homodimer associates with one molecule of MDM12 on each side in a pairwise head-to-tail manner, and the SMP-LTD domains of MMM1 and MDM12 generate a continuous hydrophobic tunnel for phospholipid trafficking.

The protein resides in the mitochondrion outer membrane. The protein localises to the endoplasmic reticulum membrane. Its function is as follows. Component of the ERMES/MDM complex, which serves as a molecular tether to connect the endoplasmic reticulum (ER) and mitochondria. Components of this complex are involved in the control of mitochondrial shape and protein biogenesis, and function in nonvesicular lipid trafficking between the ER and mitochondria. MDM12 is required for the interaction of the ER-resident membrane protein MMM1 and the outer mitochondrial membrane-resident beta-barrel protein MDM10. The MDM12-MMM1 subcomplex functions in the major beta-barrel assembly pathway that is responsible for biogenesis of all mitochondrial outer membrane beta-barrel proteins, and acts in a late step after the SAM complex. The MDM10-MDM12-MMM1 subcomplex further acts in the TOM40-specific pathway after the action of the MDM12-MMM1 complex. Essential for establishing and maintaining the structure of mitochondria and maintenance of mtDNA nucleoids. This Paracoccidioides brasiliensis (strain Pb18) protein is Mitochondrial distribution and morphology protein 12.